The following is a 560-amino-acid chain: Putative transport protein VP1232 (560 aa).

A run of 5 helical transmembrane segments spans residues 8 to 28 (LLDQ…LAIG), 37 to 57 (LGNS…GFSF), 66 to 86 (FMLF…GIFF), 91 to 111 (HYFI…YGLS), and 164 to 184 (VGYA…AKLL). RCK C-terminal domains lie at 205–292 (LGNS…FRNG) and 293–376 (KEVF…KIGF). The next 6 membrane-spanning stretches (helical) occupy residues 386 to 406 (LLAF…TMTF), 409 to 429 (VSFS…LGFL), 443 to 463 (ALNM…GLSA), 478 to 498 (VIGL…LVGA), 506 to 526 (ALLF…DVVN), and 539 to 559 (AGTY…LIIL).

It belongs to the AAE transporter (TC 2.A.81) family. YbjL subfamily.

Its subcellular location is the cell membrane. The chain is Putative transport protein VP1232 from Vibrio parahaemolyticus serotype O3:K6 (strain RIMD 2210633).